The following is a 461-amino-acid chain: Ribosomal protein uS12 methylthiotransferase RimO (461 aa).

The region spanning 13–128 (PKVGFVSLGC…VMQHVHTHLP (116 aa)) is the MTTase N-terminal domain. The [4Fe-4S] cluster site is built by C22, C58, C87, C159, C163, and C166. Residues 145–390 (LTPRHYAYLK…MEVAEEVSAK (246 aa)) form the Radical SAM core domain. The TRAM domain maps to 393 to 461 (AKKVGKTLKV…ADGHDLWGEV (69 aa)).

The protein belongs to the methylthiotransferase family. RimO subfamily. Requires [4Fe-4S] cluster as cofactor.

The protein resides in the cytoplasm. It carries out the reaction L-aspartate(89)-[ribosomal protein uS12]-hydrogen + (sulfur carrier)-SH + AH2 + 2 S-adenosyl-L-methionine = 3-methylsulfanyl-L-aspartate(89)-[ribosomal protein uS12]-hydrogen + (sulfur carrier)-H + 5'-deoxyadenosine + L-methionine + A + S-adenosyl-L-homocysteine + 2 H(+). In terms of biological role, catalyzes the methylthiolation of an aspartic acid residue of ribosomal protein uS12. In Paraburkholderia phytofirmans (strain DSM 17436 / LMG 22146 / PsJN) (Burkholderia phytofirmans), this protein is Ribosomal protein uS12 methylthiotransferase RimO.